An 846-amino-acid polypeptide reads, in one-letter code: Iron-sulfur cluster assembly SufBD family protein Mb1496 (846 aa).

A disordered region spans residues 1 to 20 (MTLTPEASKSVAQPPTQAPL). Residues 388–528 (LAGYYLAEGH…LQSILARLGH (141 aa)) form the DOD-type homing endonuclease domain.

The protein belongs to the iron-sulfur cluster assembly SufBD family. Post-translationally, this protein undergoes a protein self splicing that involves a post-translational excision of the intervening region (intein) followed by peptide ligation.

The sequence is that of Iron-sulfur cluster assembly SufBD family protein Mb1496 from Mycobacterium bovis (strain ATCC BAA-935 / AF2122/97).